Consider the following 85-residue polypeptide: Small ribosomal subunit protein uS17 (85 aa).

Belongs to the universal ribosomal protein uS17 family. Part of the 30S ribosomal subunit.

One of the primary rRNA binding proteins, it binds specifically to the 5'-end of 16S ribosomal RNA. This is Small ribosomal subunit protein uS17 from Mycoplasmoides gallisepticum (strain R(low / passage 15 / clone 2)) (Mycoplasma gallisepticum).